A 180-amino-acid chain; its full sequence is ATP-dependent Clp protease proteolytic subunit 2 (180 aa).

Ser86 (nucleophile) is an active-site residue. His111 is a catalytic residue.

Belongs to the peptidase S14 family. Fourteen ClpP subunits assemble into 2 heptameric rings which stack back to back to give a disk-like structure with a central cavity, resembling the structure of eukaryotic proteasomes.

The protein resides in the cytoplasm. It carries out the reaction Hydrolysis of proteins to small peptides in the presence of ATP and magnesium. alpha-casein is the usual test substrate. In the absence of ATP, only oligopeptides shorter than five residues are hydrolyzed (such as succinyl-Leu-Tyr-|-NHMec, and Leu-Tyr-Leu-|-Tyr-Trp, in which cleavage of the -Tyr-|-Leu- and -Tyr-|-Trp bonds also occurs).. Its function is as follows. Cleaves peptides in various proteins in a process that requires ATP hydrolysis. Has a chymotrypsin-like activity. Plays a major role in the degradation of misfolded proteins. The protein is ATP-dependent Clp protease proteolytic subunit 2 of Tropheryma whipplei (strain Twist) (Whipple's bacillus).